Here is a 451-residue protein sequence, read N- to C-terminus: Jacalin-related lectin 35 (451 aa).

The residue at position 2 (Ala2) is an N-acetylalanine. 3 Jacalin-type lectin domains span residues 2 to 143 (AKKL…YIIP), 156 to 297 (LTKL…YIIP), and 306 to 448 (SNTI…NVAP).

This sequence belongs to the jacalin lectin family. In terms of assembly, component of the PYK10 complex, at least composed of PYK10/BGLU23, BGLU21, BGLU22, JAL22, JAL23, PBP1/JAL30, PBP2/JAL31, JAL32, JAL33, JAL34, JAL35, GLL22 and GLL23.

This chain is Jacalin-related lectin 35 (JAL35), found in Arabidopsis thaliana (Mouse-ear cress).